A 78-amino-acid chain; its full sequence is DNA-directed RNA polymerase subunit Rpo5 (78 aa).

This sequence belongs to the archaeal Rpo5/eukaryotic RPB5 RNA polymerase subunit family. Part of the RNA polymerase complex.

The protein localises to the cytoplasm. The catalysed reaction is RNA(n) + a ribonucleoside 5'-triphosphate = RNA(n+1) + diphosphate. In terms of biological role, DNA-dependent RNA polymerase (RNAP) catalyzes the transcription of DNA into RNA using the four ribonucleoside triphosphates as substrates. This chain is DNA-directed RNA polymerase subunit Rpo5, found in Methanosarcina mazei (strain ATCC BAA-159 / DSM 3647 / Goe1 / Go1 / JCM 11833 / OCM 88) (Methanosarcina frisia).